The chain runs to 152 residues: UPF0266 membrane protein CKO_01158 (152 aa).

A run of 3 helical transmembrane segments spans residues 6–26, 45–65, and 67–87; these read LVLV…QFIM, VDSV…VTSH, and AQIT…IFWV.

The protein belongs to the UPF0266 family.

The protein resides in the cell inner membrane. This Citrobacter koseri (strain ATCC BAA-895 / CDC 4225-83 / SGSC4696) protein is UPF0266 membrane protein CKO_01158.